The chain runs to 165 residues: Endoribonuclease YbeY (165 aa).

Residues His-131, His-135, and His-141 each coordinate Zn(2+).

The protein belongs to the endoribonuclease YbeY family. Zn(2+) serves as cofactor.

It localises to the cytoplasm. Functionally, single strand-specific metallo-endoribonuclease involved in late-stage 70S ribosome quality control and in maturation of the 3' terminus of the 16S rRNA. This Lachnoclostridium phytofermentans (strain ATCC 700394 / DSM 18823 / ISDg) (Clostridium phytofermentans) protein is Endoribonuclease YbeY.